Consider the following 357-residue polypeptide: Peptide chain release factor 1 (357 aa).

Glutamine 233 bears the N5-methylglutamine mark.

It belongs to the prokaryotic/mitochondrial release factor family. In terms of processing, methylated by PrmC. Methylation increases the termination efficiency of RF1.

The protein localises to the cytoplasm. Its function is as follows. Peptide chain release factor 1 directs the termination of translation in response to the peptide chain termination codons UAG and UAA. The chain is Peptide chain release factor 1 from Syntrophus aciditrophicus (strain SB).